The primary structure comprises 722 residues: Pentatricopeptide repeat-containing protein At4g14820 (722 aa).

PPR repeat units follow at residues 75–109 (ESIV…GGRL), 110–140 (DQFS…AFKI), 145–175 (DPFV…MSHR), 176–210 (DVVT…NVMP), 211–245 (DEMI…DVRM), 246–276 (DTHL…MSVR), 277–307 (NLFV…TEKK), 308–342 (DLVC…GIKP), 343–377 (DVVS…GLES), 378–408 (ELSI…MPRR), 409–443 (NVVS…NVEP), 444–479 (NEVT…NITP), and 480–514 (KLEH…SNVV). Residues 515-590 (IWGSLMSACR…EKGLSRIDQN (76 aa)) are type E motif. The segment at 591-621 (GKSHEFLIGDKRHKQSNEIYAKLDEVVSKLK) is type E(+) motif. Residues 622–722 (LAGYVPDCGS…NGLCSCRDYW (101 aa)) are type DYW motif.

Belongs to the PPR family. PCMP-H subfamily.

This chain is Pentatricopeptide repeat-containing protein At4g14820 (PCMP-H3), found in Arabidopsis thaliana (Mouse-ear cress).